Consider the following 452-residue polypeptide: Cysteine--tRNA ligase (452 aa).

A Zn(2+)-binding site is contributed by C35. The 'HIGH' region signature appears at 37-47; the sequence is PTVYDRAHLGN. Zn(2+) contacts are provided by C215, H240, and E244. Residues 273–277 carry the 'KMSKS' region motif; it reads KMSKS. K276 is an ATP binding site.

Belongs to the class-I aminoacyl-tRNA synthetase family. Monomer. Zn(2+) serves as cofactor.

It is found in the cytoplasm. It catalyses the reaction tRNA(Cys) + L-cysteine + ATP = L-cysteinyl-tRNA(Cys) + AMP + diphosphate. The polypeptide is Cysteine--tRNA ligase (Gluconobacter oxydans (strain 621H) (Gluconobacter suboxydans)).